Consider the following 73-residue polypeptide: Putative defensin-like protein 277 (73 aa).

The N-terminal stretch at M1–A24 is a signal peptide. 4 disulfides stabilise this stretch: C27–C64, C33–C52, C39–C62, and C43–C63.

The protein belongs to the DEFL family.

The protein localises to the secreted. The sequence is that of Putative defensin-like protein 277 from Arabidopsis thaliana (Mouse-ear cress).